A 920-amino-acid polypeptide reads, in one-letter code: MKNSKLFFRFLFLFFFFCLESSRGQDNGKTQVNIGVVSDVGTSYPDVAMLCINMSLADFYSSRPQFQTRLVVNVGDSKNDVVGAATAAIDLIKNKQVKAILGPWTSMQAHFLIEIGQKSRVPVVSYSATSPSLTSLRSPYFFRATYEDSSQVHAIKAIIKLFGWREVVPVYIDNTFGEGIMPRLTDSLQDINVRIPYRSVIPLNATDQDISVELLKMMNMPTRVFIVHMSSSLASTVFIKAKELGLMKPGYVWILTNGVMDGLRSINETGIEAMEGVLGIKTYIPKSKDLETFRSRWKRRFPQMELNVYGLWAYDATTALAMAIEDAGINNMTFSNVDTGKNVSELDGLGLSQFGPKLLQTVSTVQFKGLAGDFHFVSGQLQPSVFEIVNMIGTGERSIGFWTEGNGLVKKLDQEPRSIGTLSTWPDHLKHIIWPGEAVSVPKGWEIPTNGKKLRIGVPKRIGFTDLVKVTRDPITNSTVVKGFCIDFFEAVIQAMPYDVSYEFFPFEKPNGEPAGNHNDLVHQVYLGQFDAVVGDTTILANRSSFVDFTLPFMKSGVGLIVPLKDEVKRDKFSFLKPLSIELWLTTLVFFFLVGISVWTLEHRVNSDFRGPANYQASTIFWFAFSTMVFAPRERVLSFGARSLVVTWYFVLLVLTQSYTASLASLLTSQQLNPTITSMSSLLHRGETVGYQRTSFILGKLNETGFPQSSLVPFDTAEECDELLKKGPKNGGVAAAFLGTPYVRLFLGQYCNTYKMVEEPFNVDGFGFVFPIGSPLVADVSRAILKVAESPKAVELEHAWFKKKEQSCPDPVTNPDSNPTVTAIQLGVGSFWFLFLVVFVVCVLALGKFTFCFLWKTKGKDLWKEFLKRDTDSYINDIEKCLCSQEMPENSNKATNQTNYGMELRVRNIVQVNQTDPDCL.

Residues 1-24 (MKNSKLFFRFLFLFFFFCLESSRG) form the signal peptide. Residues 25 to 580 (QDNGKTQVNI…DKFSFLKPLS (556 aa)) are Extracellular-facing. N-linked (GlcNAc...) asparagine glycans are attached at residues N53, N204, N267, N331, N342, N477, and N542. Residues 581-601 (IELWLTTLVFFFLVGISVWTL) traverse the membrane as a helical segment. The Cytoplasmic segment spans residues 602-610 (EHRVNSDFR). The helical transmembrane segment at 611-631 (GPANYQASTIFWFAFSTMVFA) threads the bilayer. Over 632-635 (PRER) the chain is Cytoplasmic. A helical membrane pass occupies residues 636–656 (VLSFGARSLVVTWYFVLLVLT). The Extracellular segment spans residues 657-830 (QSYTASLASL…VTAIQLGVGS (174 aa)). N702 carries N-linked (GlcNAc...) asparagine glycosylation. A helical transmembrane segment spans residues 831–851 (FWFLFLVVFVVCVLALGKFTF). The Cytoplasmic portion of the chain corresponds to 852–920 (CFLWKTKGKD…QVNQTDPDCL (69 aa)).

The protein belongs to the glutamate-gated ion channel (TC 1.A.10.1) family. As to quaternary structure, may form heteromers. As to expression, expressed predominantly in roots.

It localises to the membrane. In terms of biological role, glutamate-gated receptor that probably acts as a non-selective cation channel. May be involved in light-signal transduction and calcium homeostasis via the regulation of calcium influx into cells. The chain is Glutamate receptor 2.2 (GLR2.2) from Arabidopsis thaliana (Mouse-ear cress).